Here is a 270-residue protein sequence, read N- to C-terminus: uncharacterized protein (270 aa).

Positions 1-10 (MFGLKVKDAT) are enriched in basic and acidic residues. Disordered regions lie at residues 1–115 (MFGL…PTPW) and 215–236 (QTGF…QGEQ). Low complexity-rich tracts occupy residues 26-41 (SSSS…TQRG) and 98-113 (GTSP…GTPT).

It belongs to the adhesin P1 family.

This is an uncharacterized protein from Mycoplasma pneumoniae (strain ATCC 29342 / M129 / Subtype 1) (Mycoplasmoides pneumoniae).